A 321-amino-acid polypeptide reads, in one-letter code: D-alanine--D-alanine ligase (321 aa).

The ATP-grasp domain maps to 121–315 (RSWFLTNNIN…FVNLIEEILK (195 aa)). 148–199 (IKRPYVIKPFTQGSSIGVEVIFEEDDFNFANYDFPYGDEVIIEKYIKGRELQ) is an ATP binding site. Positions 268, 282, and 284 each coordinate Mg(2+).

This sequence belongs to the D-alanine--D-alanine ligase family. It depends on Mg(2+) as a cofactor. The cofactor is Mn(2+).

It localises to the cytoplasm. The enzyme catalyses 2 D-alanine + ATP = D-alanyl-D-alanine + ADP + phosphate + H(+). It functions in the pathway cell wall biogenesis; peptidoglycan biosynthesis. Cell wall formation. This is D-alanine--D-alanine ligase from Rickettsia bellii (strain OSU 85-389).